Consider the following 148-residue polypeptide: 3-hydroxyacyl-[acyl-carrier-protein] dehydratase FabZ (148 aa).

His50 is an active-site residue.

The protein belongs to the thioester dehydratase family. FabZ subfamily.

It localises to the cytoplasm. It carries out the reaction a (3R)-hydroxyacyl-[ACP] = a (2E)-enoyl-[ACP] + H2O. In terms of biological role, involved in unsaturated fatty acids biosynthesis. Catalyzes the dehydration of short chain beta-hydroxyacyl-ACPs and long chain saturated and unsaturated beta-hydroxyacyl-ACPs. The chain is 3-hydroxyacyl-[acyl-carrier-protein] dehydratase FabZ from Levilactobacillus brevis (strain ATCC 367 / BCRC 12310 / CIP 105137 / JCM 1170 / LMG 11437 / NCIMB 947 / NCTC 947) (Lactobacillus brevis).